Here is a 727-residue protein sequence, read N- to C-terminus: Phenylalanine ammonia-lyase str11 (727 aa).

The active-site Proton donor/acceptor is the Tyr-105. Residues 210 to 212 (ASG) constitute a cross-link (5-imidazolinone (Ala-Gly)). At Ser-211 the chain carries 2,3-didehydroalanine (Ser). Residues Asn-271, Gln-361, Arg-367, Asn-397, Lys-468, Glu-496, and Asn-499 each coordinate (E)-cinnamate.

It belongs to the PAL/histidase family. Contains an active site 4-methylidene-imidazol-5-one (MIO), which is formed autocatalytically by cyclization and dehydration of residues Ala-Ser-Gly.

It catalyses the reaction L-phenylalanine = (E)-cinnamate + NH4(+). It functions in the pathway mycotoxin biosynthesis. In terms of biological role, phenylalanine ammonia-lyase; part of the gene cluster that mediates the biosynthesis of strobilurin A, an antifungal polyketide that contains a key beta-methoxyacrylate toxophore that targets the complex III of the mitochondrial electron transport chain. Strobilurin biosynthesis begins with construction of benzoyl CoA by step-wise elimination of ammonia from phenylalanine by the phenylalanine ammonia-lyase str11, oxygenation by str8 and retro-Claisen reaction to form benzoic acid, which is activated to its CoA thiolester benzoyl CoA by the dedicated CoA ligase str10. Benzoyl CoA forms the starter unit for the highly reducing polyketide synthase stpks1 that produces the polyketide prestrobilutin A. The FAD-dependent oxygenase str9 then catalyzes the key oxidative rearrangement responsible for the creation of the beta-methoxyacrylate toxophore. Str9 performs epoxidation of the 2,3 olefin of prestrobilutin A, followed by Meinwald rearrangement to furnish the aldehyde intermediate. Rapid enolization of the aldehyde intermediate would give the beta-methoxyacrylate skeleton and methylations catalyzed by str2 and str3 complete the synthesis and lead to the production of strobilurin A. The short-chain dehydrogenase stl2 and the dehydrogenase str4 play a role in the shunt pathway leading to the production of bolineol. The cluster encodes no obvious halogenase gene that could be involved in production of strobilurin B, nor any obvious dimethylallyl-transferase that could be involved in the production of strobilurin G. It is possible that unknown proteins encoded in, or near, the cluster (such as str1 or stl1) may form new classes of halogenases or dimethylally-transferases, or that the responsible genes are located elsewhere on the genome. Similarly, proteins encoded by str5/str6 hydrolases appear to have no chemical role in the biosynthesis of strobilurin A. Finally, no obvious self-resistance gene is found within the cluster. The protein is Phenylalanine ammonia-lyase str11 of Strobilurus tenacellus.